The primary structure comprises 326 residues: uncharacterized protein (326 aa).

Tyrosine 53 acts as the Proton donor in catalysis. 215-225 (SPLAGGLLGGK) contributes to the NADP(+) binding site. The stretch at 242–305 (IEKHRLQLEK…AVEISLDKEI (64 aa)) forms a coiled coil.

Belongs to the aldo/keto reductase family. Aldo/keto reductase 2 subfamily.

This is an uncharacterized protein from Bacillus subtilis (strain 168).